Here is a 150-residue protein sequence, read N- to C-terminus: Transcriptional repressor NrdR (150 aa).

A zinc finger lies at 3 to 34 (CPFCHHPQSRVIDSRTVENGFVTRRRRQCTKC). The ATP-cone domain maps to 46–136 (LLVEKRNGVT…VYKSFSSMED (91 aa)).

The protein belongs to the NrdR family. The cofactor is Zn(2+).

In terms of biological role, negatively regulates transcription of bacterial ribonucleotide reductase nrd genes and operons by binding to NrdR-boxes. The chain is Transcriptional repressor NrdR from Corynebacterium kroppenstedtii (strain DSM 44385 / JCM 11950 / CIP 105744 / CCUG 35717).